Consider the following 312-residue polypeptide: DNA-directed RNA polymerase subunit alpha (312 aa).

An alpha N-terminal domain (alpha-NTD) region spans residues 1–229; the sequence is MLQYQIDRID…ELFQPLATVT (229 aa). Positions 240–312 are alpha C-terminal domain (alpha-CTD); the sequence is PSPEAQIPLE…ISIPQSRTSV (73 aa).

The protein belongs to the RNA polymerase alpha chain family. In terms of assembly, in cyanobacteria the RNAP catalytic core is composed of 2 alpha, 1 beta, 1 beta', 1 gamma and 1 omega subunit. When a sigma factor is associated with the core the holoenzyme is formed, which can initiate transcription.

The enzyme catalyses RNA(n) + a ribonucleoside 5'-triphosphate = RNA(n+1) + diphosphate. DNA-dependent RNA polymerase catalyzes the transcription of DNA into RNA using the four ribonucleoside triphosphates as substrates. In Prochlorococcus marinus (strain AS9601), this protein is DNA-directed RNA polymerase subunit alpha.